A 97-amino-acid chain; its full sequence is Large ribosomal subunit protein uL23 (97 aa).

This sequence belongs to the universal ribosomal protein uL23 family. Part of the 50S ribosomal subunit. Contacts protein L29, and trigger factor when it is bound to the ribosome.

One of the early assembly proteins it binds 23S rRNA. One of the proteins that surrounds the polypeptide exit tunnel on the outside of the ribosome. Forms the main docking site for trigger factor binding to the ribosome. This Agrobacterium fabrum (strain C58 / ATCC 33970) (Agrobacterium tumefaciens (strain C58)) protein is Large ribosomal subunit protein uL23.